A 338-amino-acid chain; its full sequence is PRAQPAPAQPRVAPPPGGAPGAARAGGAARRGDSSTAASRVPGPEDATQAGSGPGPAEPSSEDPPPSRSPGPERASLCPAGGGPGEALSPSGGLRPNGQTKPLPALKLALEYIVPCMNKHGICVVDDFLGRETGQQIGDEVRALHDTGKFTDGQLVSQKSDSSKDIRGDKITWIEGKEPGCETIGLLMSSMDDLIRHCSGKLGNYRINGRTKAMVACYPGNGTGYVRHVDNPNGDGRCVTCIYYLNKDWDAKVSGGILRIFPEGKAQFADIEPKFDRLLFFWSDRRNPHEVQPAYATRYAITVWYFDADERARAKVKYLTGEKGVRVELKPNSVSKDV.

The span at 1 to 11 (PRAQPAPAQPR) shows a compositional bias: low complexity. Residues 1–99 (PRAQPAPAQP…PSGGLRPNGQ (99 aa)) form a disordered region. Position 52 is a phosphoserine (Ser52). S-nitrosocysteine is present on residues Cys116 and Cys123. Positions 156 to 166 (VSQKSDSSKDI) are beta(2)beta(3) 'finger-like' loop. In terms of domain architecture, Fe2OG dioxygenase spans 209–307 (GRTKAMVACY…RYAITVWYFD (99 aa)). S-nitrosocysteine is present on Cys217. Fe cation is bound by residues His228 and Asp230. S-nitrosocysteine occurs at positions 238 and 241. His289 contributes to the Fe cation binding site. 2-oxoglutarate is bound at residue Arg298.

Monomer. Interacts with ING4; the interaction inhibits the hydroxylation of HIF alpha proteins. Interacts with PTGES3 (via PXLE motif); thereby recruiting EGLN1 to the HSP90 pathway to facilitate HIF alpha proteins hydroxylation. Interacts with LIMD1. Found in a complex composed of LIMD1, VHL, EGLN1/PHD2, ELOB and CUL2. Interacts with EPAS1. Interacts with CBFA2T3 and HIF1A. The cofactor is Fe(2+). L-ascorbate is required as a cofactor. S-nitrosylation inhibits the enzyme activity up to 60% under aerobic conditions. Chelation of Fe(2+) has no effect on the S-nitrosylation. It is uncertain whether nitrosylation occurs on Cys-238 or Cys-241. As to expression, expressed in heart, liver, kidney, brain, liver and testis. Highest levels in heart, lowest in liver.

It localises to the cytoplasm. The protein resides in the nucleus. The catalysed reaction is L-prolyl-[hypoxia-inducible factor alpha subunit] + 2-oxoglutarate + O2 = trans-4-hydroxy-L-prolyl-[hypoxia-inducible factor alpha subunit] + succinate + CO2. Its activity is regulated as follows. Increased activation in hypoxia. Hydroxylation of the C-terminal ODD domain (CODD) proline of HIF1A is activated by cyclosporin A (CsA). Its function is as follows. Cellular oxygen sensor that catalyzes, under normoxic conditions, the post-translational formation of 4-hydroxyproline in hypoxia-inducible factor (HIF) alpha proteins. Hydroxylates a specific proline found in each of the oxygen-dependent degradation (ODD) domains (N-terminal, NODD, and C-terminal, CODD) of HIF1A. Also hydroxylates HIF2A. Has a preference for the CODD site for both HIF1A and HIF1B. Hydroxylated HIFs are then targeted for proteasomal degradation via the von Hippel-Lindau ubiquitination complex. Under hypoxic conditions, the hydroxylation reaction is attenuated allowing HIFs to escape degradation resulting in their translocation to the nucleus, heterodimerization with HIF1B, and increased expression of hypoxy-inducible genes. EGLN1 is the most important isozyme under normoxia and, through regulating the stability of HIF1, involved in various hypoxia-influenced processes such as angiogenesis in retinal and cardiac functionality. Target proteins are preferentially recognized via a LXXLAP motif. The sequence is that of Egl nine homolog 1 (Egln1) from Rattus norvegicus (Rat).